A 119-amino-acid polypeptide reads, in one-letter code: NADH-quinone oxidoreductase subunit A (119 aa).

3 helical membrane-spanning segments follow: residues 7–27, 63–83, and 88–108; these read FPVL…MFLG, LIAI…PWGV, and IGWF…VGFV.

It belongs to the complex I subunit 3 family. As to quaternary structure, NDH-1 is composed of 14 different subunits. Subunits NuoA, H, J, K, L, M, N constitute the membrane sector of the complex.

The protein resides in the cell membrane. The enzyme catalyses a quinone + NADH + 5 H(+)(in) = a quinol + NAD(+) + 4 H(+)(out). In terms of biological role, NDH-1 shuttles electrons from NADH, via FMN and iron-sulfur (Fe-S) centers, to quinones in the respiratory chain. The immediate electron acceptor for the enzyme in this species is believed to be ubiquinone. Couples the redox reaction to proton translocation (for every two electrons transferred, four hydrogen ions are translocated across the cytoplasmic membrane), and thus conserves the redox energy in a proton gradient. The protein is NADH-quinone oxidoreductase subunit A of Polynucleobacter asymbioticus (strain DSM 18221 / CIP 109841 / QLW-P1DMWA-1) (Polynucleobacter necessarius subsp. asymbioticus).